The primary structure comprises 616 residues: Elongation factor 4 (616 aa).

The 182-residue stretch at 14–195 folds into the tr-type G domain; that stretch reads SRIRNFCIIA…EVIRQVPPPV (182 aa). GTP-binding positions include 26-31 and 142-145; these read DHGKST and NKID.

This sequence belongs to the TRAFAC class translation factor GTPase superfamily. Classic translation factor GTPase family. LepA subfamily.

The protein localises to the cell membrane. The enzyme catalyses GTP + H2O = GDP + phosphate + H(+). In terms of biological role, required for accurate and efficient protein synthesis under certain stress conditions. May act as a fidelity factor of the translation reaction, by catalyzing a one-codon backward translocation of tRNAs on improperly translocated ribosomes. Back-translocation proceeds from a post-translocation (POST) complex to a pre-translocation (PRE) complex, thus giving elongation factor G a second chance to translocate the tRNAs correctly. Binds to ribosomes in a GTP-dependent manner. This Nocardia farcinica (strain IFM 10152) protein is Elongation factor 4.